Consider the following 834-residue polypeptide: Glycerol-3-phosphate acyltransferase (834 aa).

Positions 309 to 314 match the HXXXXD motif motif; the sequence is CHRSHI.

This sequence belongs to the GPAT/DAPAT family.

The protein resides in the cell inner membrane. It carries out the reaction sn-glycerol 3-phosphate + an acyl-CoA = a 1-acyl-sn-glycero-3-phosphate + CoA. It functions in the pathway phospholipid metabolism; CDP-diacylglycerol biosynthesis; CDP-diacylglycerol from sn-glycerol 3-phosphate: step 1/3. The polypeptide is Glycerol-3-phosphate acyltransferase (Pseudomonas fluorescens (strain Pf0-1)).